Reading from the N-terminus, the 79-residue chain is Probable 26S proteasome complex subunit sem1 (79 aa).

The segment covering 1–21 has biased composition (basic and acidic residues); that stretch reads MSAPDKEKEKEKEETNNKSED. The interval 1–30 is disordered; it reads MSAPDKEKEKEKEETNNKSEDLGLLEEDDE. Ser19 carries the post-translational modification Phosphoserine.

Belongs to the DSS1/SEM1 family. As to quaternary structure, part of the 26S proteasome.

In terms of biological role, subunit of the 26S proteasome which plays a role in ubiquitin-dependent proteolysis. This is Probable 26S proteasome complex subunit sem1 from Drosophila melanogaster (Fruit fly).